Reading from the N-terminus, the 204-residue chain is Ribosomal RNA small subunit methyltransferase G (204 aa).

The S-adenosyl-L-methionine site is built by Gly-73, Phe-78, and Arg-139.

This sequence belongs to the methyltransferase superfamily. RNA methyltransferase RsmG family.

The protein localises to the cytoplasm. The catalysed reaction is guanosine(527) in 16S rRNA + S-adenosyl-L-methionine = N(7)-methylguanosine(527) in 16S rRNA + S-adenosyl-L-homocysteine. Specifically methylates the N7 position of guanine in position 527 of 16S rRNA. The sequence is that of Ribosomal RNA small subunit methyltransferase G from Coxiella burnetii (strain RSA 331 / Henzerling II).